Consider the following 1220-residue polypeptide: Plasma membrane calcium-transporting ATPase 1 (1220 aa).

Gly2 is modified (N-acetylglycine). The Cytoplasmic portion of the chain corresponds to 2–105 (GDMANNSVAY…KTFLQLVWEA (104 aa)). A phosphoserine mark is found at Ser8 and Ser17. Residues 106 to 126 (LQDVTLIILEIAAIVSLGLSF) form a helical membrane-spanning segment. The Extracellular portion of the chain corresponds to 127 to 154 (YQPPEGDNALCGEVSVGEEEGEGETGWI). A helical membrane pass occupies residues 155–175 (EGAAILLSVVCVVLVTAFNDW). The Cytoplasmic segment spans residues 176-366 (SKEKQFRGLQ…KEKSVLQGKL (191 aa)). The disordered stretch occupies residues 297-356 (EEEKKDEKKKEKKNKKQDGAIENRNKAKAQDGAAMEMQPLKSEEGGDGDEKDKKKANLPK). Basic and acidic residues-rich tracts occupy residues 312-325 (KQDG…KAKA) and 337-356 (KSEE…NLPK). Phosphoserine is present on Ser338. A helical transmembrane segment spans residues 367–386 (TKLAVQIGKAGLLMSAITVI). Residues 387 to 418 (ILVLYFVIDTFWVQKRPWLAECTPIYIQYFVK) are Extracellular-facing. The helical transmembrane segment at 419–439 (FFIIGVTVLVVAVPEGLPLAV) threads the bilayer. Topologically, residues 440-855 (TISLAYSVKK…RNVYDSISKF (416 aa)) are cytoplasmic. Asp475 serves as the catalytic 4-aspartylphosphate intermediate. Residues Asp475, Thr477, and Asp797 each contribute to the Mg(2+) site. Residues 856–876 (LQFQLTVNVVAVIVAFTGACI) traverse the membrane as a helical segment. Residues 877-882 (TQDSPL) are Extracellular-facing. Residues 883–903 (KAVQMLWVNLIMDTLASLALA) traverse the membrane as a helical segment. Topologically, residues 904 to 927 (TEPPTESLLLRKPYGRNKPLISRT) are cytoplasmic. Residues 928–948 (MMKNILGHAFYQLVVVFTLLF) form a helical membrane-spanning segment. Residues 949-971 (AGEKFFDIDSGRNAPLHAPPSEH) are Extracellular-facing. The helical transmembrane segment at 972–991 (YTIVFNTFVLMQLFNEINAR) threads the bilayer. The Cytoplasmic segment spans residues 992–1005 (KIHGERNVFEGIFN). A helical transmembrane segment spans residues 1006-1027 (NAIFCTIVLGTFVVQIIIVQFG). The Extracellular portion of the chain corresponds to 1028–1039 (GKPFSCSELSIE). A helical membrane pass occupies residues 1040 to 1060 (QWLWSIFLGMGTLLWGQLIST). At 1061-1220 (IPTSRLKFLK…SPLHSLETSL (160 aa)) the chain is on the cytoplasmic side. Positions 1100–1117 (LRRGQILWFRGLNRIQTQ) are calmodulin-binding subdomain A. Position 1116 is a phosphothreonine; by PKC (Thr1116). Residues 1118 to 1220 (IRVVNAFRSS…SPLHSLETSL (103 aa)) form a required for basolateral membrane targeting region. A phosphoserine mark is found at Ser1140 and Ser1155. The interval 1160-1220 (PLIDDTDAED…SPLHSLETSL (61 aa)) is disordered. Residue Thr1165 is modified to Phosphothreonine. The residue at position 1178 (Ser1178) is a Phosphoserine; by PKA. Position 1182 is a phosphoserine (Ser1182). The segment covering 1200-1220 (MNKSATSSSPGSPLHSLETSL) has biased composition (polar residues).

Belongs to the cation transport ATPase (P-type) (TC 3.A.3) family. Type IIB subfamily. Monomer. Dimer. Oligomer. Calmodulin binding. Interacts with PDZD11. Interacts with SLC35G1 and STIM1; inhibits calcium-transporting ATPase activity after store depletion. Interacts with YWHAE; interacts with the monomeric and dimeric forms of the YWHAE but prefer the monomer form; this interaction inhibits calcium-transporting ATPase activity. Interacts with NPTN; this interaction stabilizes ATP2B1 and increases ATPase activity; this interaction controls T cell calcium homeostasis following T cell activation. Interacts with EPB41; regulates small intestinal calcium absorption through regulation of membrane expression of ATP2B1. As to expression, isoform B: Ubiquitously expressed. Isoform C: Found in brain cortex, skeletal muscle and heart muscle. Isoform D: Has only been found in fetal skeletal muscle. Isoform K: Found in small intestine and liver. Abundantly expressed in the endometrial epithelial cells and glandular epithelial cells in early-proliferative phase and early-secretory phases.

It is found in the cell membrane. The protein localises to the basolateral cell membrane. It localises to the synapse. The protein resides in the presynaptic cell membrane. Its subcellular location is the cytoplasmic vesicle. It is found in the secretory vesicle. The protein localises to the synaptic vesicle membrane. The catalysed reaction is Ca(2+)(in) + ATP + H2O = Ca(2+)(out) + ADP + phosphate + H(+). Functionally, catalyzes the hydrolysis of ATP coupled with the transport of calcium from the cytoplasm to the extracellular space thereby maintaining intracellular calcium homeostasis. Plays a role in blood pressure regulation through regulation of intracellular calcium concentration and nitric oxide production leading to regulation of vascular smooth muscle cells vasoconstriction. Positively regulates bone mineralization through absorption of calcium from the intestine. Plays dual roles in osteoclast differentiation and survival by regulating RANKL-induced calcium oscillations in preosteoclasts and mediating calcium extrusion in mature osteoclasts. Regulates insulin sensitivity through calcium/calmodulin signaling pathway by regulating AKT1 activation and NOS3 activation in endothelial cells. May play a role in synaptic transmission by modulating calcium and proton dynamics at the synaptic vesicles. This chain is Plasma membrane calcium-transporting ATPase 1, found in Homo sapiens (Human).